A 289-amino-acid chain; its full sequence is Oxaloacetate decarboxylase (289 aa).

Serine 50 is a substrate binding site. Aspartate 88 lines the Mg(2+) pocket. Residues arginine 159 and histidine 235 each contribute to the substrate site.

The protein belongs to the isocitrate lyase/PEP mutase superfamily. Oxaloacetate decarboxylase family. As to quaternary structure, homotetramer; dimer of dimers. Mg(2+) serves as cofactor.

It catalyses the reaction oxaloacetate + H(+) = pyruvate + CO2. In terms of biological role, catalyzes the decarboxylation of oxaloacetate into pyruvate. Seems to play a role in maintaining cellular concentrations of bicarbonate and pyruvate. This chain is Oxaloacetate decarboxylase, found in Pseudomonas fluorescens (strain ATCC BAA-477 / NRRL B-23932 / Pf-5).